Here is a 424-residue protein sequence, read N- to C-terminus: GTPase Obg (424 aa).

One can recognise an Obg domain in the interval 1-158; it reads MFVDRARIYI…LWVILELKLL (158 aa). The 172-residue stretch at 159–330 folds into the OBG-type G domain; sequence ADVGLIGFPN…LIYYAAQKLK (172 aa). Residues 165–172, 190–194, 212–215, 282–285, and 311–313 each bind GTP; these read GFPNVGKS, FTTIN, DIPG, NKMD, and SAA. Mg(2+)-binding residues include serine 172 and threonine 192. The region spanning 347 to 424 is the OCT domain; that stretch reads YTAVEEEPFN…MYDLEFEYFR (78 aa).

It belongs to the TRAFAC class OBG-HflX-like GTPase superfamily. OBG GTPase family. As to quaternary structure, monomer. Mg(2+) is required as a cofactor.

It localises to the cytoplasm. Its function is as follows. An essential GTPase which binds GTP, GDP and possibly (p)ppGpp with moderate affinity, with high nucleotide exchange rates and a fairly low GTP hydrolysis rate. Plays a role in control of the cell cycle, stress response, ribosome biogenesis and in those bacteria that undergo differentiation, in morphogenesis control. In Acetivibrio thermocellus (strain ATCC 27405 / DSM 1237 / JCM 9322 / NBRC 103400 / NCIMB 10682 / NRRL B-4536 / VPI 7372) (Clostridium thermocellum), this protein is GTPase Obg.